Here is a 783-residue protein sequence, read N- to C-terminus: Outer membrane usher protein FanD (783 aa).

The first 23 residues, 1-23 (MNRKKHQILKILLLCLISSKSSA), serve as a signal peptide directing secretion. Cysteines 763 and 782 form a disulfide.

It belongs to the fimbrial export usher family.

The protein resides in the cell outer membrane. In terms of biological role, involved in the export and assembly of K99 fimbrial subunits across the outer membrane. The polypeptide is Outer membrane usher protein FanD (fanD) (Escherichia coli).